Reading from the N-terminus, the 692-residue chain is Methionine--tRNA ligase (692 aa).

The 'HIGH' region motif lies at 26–36 (PYANGSIHLGH). Zn(2+) contacts are provided by C157, C160, C170, and C173. Residues 342-346 (KMSKS) carry the 'KMSKS' region motif. K345 provides a ligand contact to ATP. The 103-residue stretch at 590-692 (DFAKVDLRIA…SGAQPGMRVK (103 aa)) folds into the tRNA-binding domain.

The protein belongs to the class-I aminoacyl-tRNA synthetase family. MetG type 1 subfamily. As to quaternary structure, homodimer. It depends on Zn(2+) as a cofactor.

Its subcellular location is the cytoplasm. The enzyme catalyses tRNA(Met) + L-methionine + ATP = L-methionyl-tRNA(Met) + AMP + diphosphate. Its function is as follows. Is required not only for elongation of protein synthesis but also for the initiation of all mRNA translation through initiator tRNA(fMet) aminoacylation. The chain is Methionine--tRNA ligase from Methylobacillus flagellatus (strain ATCC 51484 / DSM 6875 / VKM B-1610 / KT).